Reading from the N-terminus, the 270-residue chain is Imidazole glycerol phosphate synthase subunit HisF (270 aa).

Catalysis depends on residues Asp-11 and Asp-135.

The protein belongs to the HisA/HisF family. Heterodimer of HisH and HisF.

Its subcellular location is the cytoplasm. The catalysed reaction is 5-[(5-phospho-1-deoxy-D-ribulos-1-ylimino)methylamino]-1-(5-phospho-beta-D-ribosyl)imidazole-4-carboxamide + L-glutamine = D-erythro-1-(imidazol-4-yl)glycerol 3-phosphate + 5-amino-1-(5-phospho-beta-D-ribosyl)imidazole-4-carboxamide + L-glutamate + H(+). It participates in amino-acid biosynthesis; L-histidine biosynthesis; L-histidine from 5-phospho-alpha-D-ribose 1-diphosphate: step 5/9. IGPS catalyzes the conversion of PRFAR and glutamine to IGP, AICAR and glutamate. The HisF subunit catalyzes the cyclization activity that produces IGP and AICAR from PRFAR using the ammonia provided by the HisH subunit. This Haloquadratum walsbyi (strain DSM 16790 / HBSQ001) protein is Imidazole glycerol phosphate synthase subunit HisF.